The sequence spans 132 residues: MSLYLYIALGGALGSVGRFALSGLVAQHYGETFPWGTLVVNVVGSFIIGFFATLTAPEGRMLVGATGRHFVMTGVLGGFTTFSSFSLQTLNLLRDGDWGRAGGNVVGSLVLCLVAVWLGHIAAVGLNSLKGS.

A run of 4 helical transmembrane segments spans residues 5-25, 32-52, 70-90, and 105-125; these read LYIALGGALGSVGRFALSGLV, TFPWGTLVVNVVGSFIIGFFA, FVMTGVLGGFTTFSSFSLQTL, and VVGSLVLCLVAVWLGHIAAVG. Positions 77 and 80 each coordinate Na(+).

It belongs to the fluoride channel Fluc/FEX (TC 1.A.43) family.

Its subcellular location is the cell inner membrane. It carries out the reaction fluoride(in) = fluoride(out). With respect to regulation, na(+) is not transported, but it plays an essential structural role and its presence is essential for fluoride channel function. Its function is as follows. Fluoride-specific ion channel. Important for reducing fluoride concentration in the cell, thus reducing its toxicity. The sequence is that of Fluoride-specific ion channel FluC from Opitutus terrae (strain DSM 11246 / JCM 15787 / PB90-1).